The following is a 463-amino-acid chain: Cysteine--tRNA ligase (463 aa).

Residue cysteine 28 participates in Zn(2+) binding. The 'HIGH' region motif lies at 30 to 40 (ITIYDLCHIGH). Residues cysteine 209, histidine 234, and glutamate 238 each contribute to the Zn(2+) site. The short motif at 266-270 (KMSKS) is the 'KMSKS' region element. Lysine 269 contributes to the ATP binding site.

This sequence belongs to the class-I aminoacyl-tRNA synthetase family. In terms of assembly, monomer. Zn(2+) is required as a cofactor.

It is found in the cytoplasm. The enzyme catalyses tRNA(Cys) + L-cysteine + ATP = L-cysteinyl-tRNA(Cys) + AMP + diphosphate. This chain is Cysteine--tRNA ligase, found in Proteus mirabilis (strain HI4320).